The chain runs to 625 residues: Phosphomethylpyrimidine synthase (625 aa).

Residues N230, M259, Y288, H324, 344-346, 385-388, and E424 each bind substrate; these read SRG and DGLR. H428 contributes to the Zn(2+) binding site. A substrate-binding site is contributed by Y451. Position 492 (H492) interacts with Zn(2+). Residues C572, C575, and C580 each contribute to the [4Fe-4S] cluster site.

It belongs to the ThiC family. Homodimer. Requires [4Fe-4S] cluster as cofactor.

It catalyses the reaction 5-amino-1-(5-phospho-beta-D-ribosyl)imidazole + S-adenosyl-L-methionine = 4-amino-2-methyl-5-(phosphooxymethyl)pyrimidine + CO + 5'-deoxyadenosine + formate + L-methionine + 3 H(+). It functions in the pathway cofactor biosynthesis; thiamine diphosphate biosynthesis. Functionally, catalyzes the synthesis of the hydroxymethylpyrimidine phosphate (HMP-P) moiety of thiamine from aminoimidazole ribotide (AIR) in a radical S-adenosyl-L-methionine (SAM)-dependent reaction. The sequence is that of Phosphomethylpyrimidine synthase from Xanthomonas oryzae pv. oryzae (strain MAFF 311018).